We begin with the raw amino-acid sequence, 160 residues long: Small ribosomal subunit protein uS7A (160 aa).

The protein belongs to the universal ribosomal protein uS7 family. As to quaternary structure, part of the 30S ribosomal subunit. Contacts proteins S9 and S11.

Functionally, one of the primary rRNA binding proteins, it binds directly to 16S rRNA where it nucleates assembly of the head domain of the 30S subunit. Is located at the subunit interface close to the decoding center, probably blocks exit of the E-site tRNA. The polypeptide is Small ribosomal subunit protein uS7A (Aquifex aeolicus (strain VF5)).